The primary structure comprises 161 residues: 6,7-dimethyl-8-ribityllumazine synthase (161 aa).

5-amino-6-(D-ribitylamino)uracil-binding positions include tryptophan 31, serine 63 to glutamate 65, and valine 85 to isoleucine 87. Residue glycine 90–threonine 91 participates in (2S)-2-hydroxy-3-oxobutyl phosphate binding. Histidine 93 acts as the Proton donor in catalysis. Residue phenylalanine 118 coordinates 5-amino-6-(D-ribitylamino)uracil. Arginine 132 serves as a coordination point for (2S)-2-hydroxy-3-oxobutyl phosphate.

The protein belongs to the DMRL synthase family.

The catalysed reaction is (2S)-2-hydroxy-3-oxobutyl phosphate + 5-amino-6-(D-ribitylamino)uracil = 6,7-dimethyl-8-(1-D-ribityl)lumazine + phosphate + 2 H2O + H(+). Its pathway is cofactor biosynthesis; riboflavin biosynthesis; riboflavin from 2-hydroxy-3-oxobutyl phosphate and 5-amino-6-(D-ribitylamino)uracil: step 1/2. Functionally, catalyzes the formation of 6,7-dimethyl-8-ribityllumazine by condensation of 5-amino-6-(D-ribitylamino)uracil with 3,4-dihydroxy-2-butanone 4-phosphate. This is the penultimate step in the biosynthesis of riboflavin. This chain is 6,7-dimethyl-8-ribityllumazine synthase, found in Arthrobacter sp. (strain FB24).